The following is a 272-amino-acid chain: 2-dehydro-3-deoxyphosphooctonate aldolase (272 aa).

This sequence belongs to the KdsA family.

It localises to the cytoplasm. The enzyme catalyses D-arabinose 5-phosphate + phosphoenolpyruvate + H2O = 3-deoxy-alpha-D-manno-2-octulosonate-8-phosphate + phosphate. Its pathway is carbohydrate biosynthesis; 3-deoxy-D-manno-octulosonate biosynthesis; 3-deoxy-D-manno-octulosonate from D-ribulose 5-phosphate: step 2/3. The protein operates within bacterial outer membrane biogenesis; lipopolysaccharide biosynthesis. This chain is 2-dehydro-3-deoxyphosphooctonate aldolase, found in Geobacter metallireducens (strain ATCC 53774 / DSM 7210 / GS-15).